The following is a 274-amino-acid chain: Cytochrome b-c1 complex subunit Rieske, mitochondrial (274 aa).

Topologically, residues 79–103 are mitochondrial matrix; the sequence is SHTDIKVPDFSEYRRLEVLDSTKSS. Residues 104 to 140 form a helical membrane-spanning segment; it reads RESSEARKGFSYLVTGVTTVGVAYAAKNAVTQFVSSM. The Mitochondrial intermembrane portion of the chain corresponds to 141-274; it reads SASADVLALA…FTSDDMVIVG (134 aa). Residues 187-272 enclose the Rieske domain; it reads EAAVELSQLR…YEFTSDDMVI (86 aa). [2Fe-2S] cluster-binding residues include cysteine 217, histidine 219, cysteine 236, histidine 239, and serine 241. Cysteine 222 and cysteine 238 form a disulfide bridge.

Belongs to the Rieske iron-sulfur protein family. As to quaternary structure, component of the ubiquinol-cytochrome c oxidoreductase (cytochrome b-c1 complex, complex III, CIII), a multisubunit enzyme composed of 11 subunits. The complex is composed of 3 respiratory subunits cytochrome b, cytochrome c1 and Rieske protein UQCRFS1, 2 core protein subunits UQCRC1/QCR1 and UQCRC2/QCR2, and 6 low-molecular weight protein subunits UQCRH/QCR6, UQCRB/QCR7, UQCRQ/QCR8, UQCR10/QCR9, UQCR11/QCR10 and subunit 9, the cleavage product of Rieske protein UQCRFS1. The complex exists as an obligatory dimer and forms supercomplexes (SCs) in the inner mitochondrial membrane with NADH-ubiquinone oxidoreductase (complex I, CI) and cytochrome c oxidase (complex IV, CIV), resulting in different assemblies (supercomplex SCI(1)III(2)IV(1) and megacomplex MCI(2)III(2)IV(2)). Incorporation of the Rieske protein UQCRFS1 is the penultimate step in complex III assembly. Interacts with TTC19, which is involved in the clearance of UQCRFS1 fragments. Component of the ubiquinol-cytochrome c oxidoreductase (cytochrome b-c1 complex, complex III, CIII). Subunit 9 corresponds to the mitochondrial targeting sequence (MTS) of Rieske protein UQCRFS1. It is retained after processing and incorporated inside complex III, where it remains bound to the complex and localizes between the 2 core subunits UQCRC1/QCR1 and UQCRC2/QCR2. Requires [2Fe-2S] cluster as cofactor. Post-translationally, proteolytic processing is necessary for the correct insertion of UQCRFS1 in the complex III dimer. Several fragments are generated during UQCRFS1 insertion, most probably due to the endogenous matrix-processing peptidase (MPP) activity of the 2 core protein subunits UQCRC1/QCR1 and UQCRC2/QCR2, which are homologous to the 2 mitochondrial-processing peptidase (MPP) subunits beta-MPP and alpha-MPP respectively. The action of the protease is also necessary for the clearance of the UQCRFS1 fragments.

The protein localises to the mitochondrion inner membrane. The enzyme catalyses a quinol + 2 Fe(III)-[cytochrome c](out) = a quinone + 2 Fe(II)-[cytochrome c](out) + 2 H(+)(out). Functionally, component of the ubiquinol-cytochrome c oxidoreductase, a multisubunit transmembrane complex that is part of the mitochondrial electron transport chain which drives oxidative phosphorylation. The respiratory chain contains 3 multisubunit complexes succinate dehydrogenase (complex II, CII), ubiquinol-cytochrome c oxidoreductase (cytochrome b-c1 complex, complex III, CIII) and cytochrome c oxidase (complex IV, CIV), that cooperate to transfer electrons derived from NADH and succinate to molecular oxygen, creating an electrochemical gradient over the inner membrane that drives transmembrane transport and the ATP synthase. The cytochrome b-c1 complex catalyzes electron transfer from ubiquinol to cytochrome c, linking this redox reaction to translocation of protons across the mitochondrial inner membrane, with protons being carried across the membrane as hydrogens on the quinol. In the process called Q cycle, 2 protons are consumed from the matrix, 4 protons are released into the intermembrane space and 2 electrons are passed to cytochrome c. The Rieske protein is a catalytic core subunit containing a [2Fe-2S] iron-sulfur cluster. It cycles between 2 conformational states during catalysis to transfer electrons from the quinol bound in the Q(0) site in cytochrome b to cytochrome c1. Incorporation of UQCRFS1 is the penultimate step in complex III assembly. Component of the ubiquinol-cytochrome c oxidoreductase (cytochrome b-c1 complex, complex III, CIII). UQCRFS1 undergoes proteolytic processing once it is incorporated in the complex III dimer. One of the fragments, called subunit 9, corresponds to its mitochondrial targeting sequence (MTS). The proteolytic processing is necessary for the correct insertion of UQCRFS1 in the complex III dimer, but the persistence of UQCRFS1-derived fragments may prevent newly imported UQCRFS1 to be processed and assembled into complex III and is detrimental for the complex III structure and function. This is Cytochrome b-c1 complex subunit Rieske, mitochondrial (UQCRFS1) from Gorilla gorilla gorilla (Western lowland gorilla).